The following is a 199-amino-acid chain: Glycerol-3-phosphate acyltransferase (199 aa).

5 helical membrane passes run 3–23, 50–70, 78–98, 113–133, and 154–174; these read AAVWTLLLAYLFGSIPAGVLV, WGPALVVAFFDVFKGGIAVLV, DWMLGGVALMAVLGHNYSVFL, LLFLDPALALWTFPIGLSVIL, and LALGRPLWEVATVFLMALLIF.

This sequence belongs to the PlsY family. Probably interacts with PlsX.

It is found in the cell inner membrane. The catalysed reaction is an acyl phosphate + sn-glycerol 3-phosphate = a 1-acyl-sn-glycero-3-phosphate + phosphate. It participates in lipid metabolism; phospholipid metabolism. Functionally, catalyzes the transfer of an acyl group from acyl-phosphate (acyl-PO(4)) to glycerol-3-phosphate (G3P) to form lysophosphatidic acid (LPA). This enzyme utilizes acyl-phosphate as fatty acyl donor, but not acyl-CoA or acyl-ACP. This is Glycerol-3-phosphate acyltransferase from Thermus thermophilus (strain ATCC BAA-163 / DSM 7039 / HB27).